The following is a 980-amino-acid chain: Peroxisomal ATPase PEX6 (980 aa).

R119 is subject to Omega-N-methylarginine. Residues 470–477 (GPPGSGKT) and 744–751 (GPPGTGKT) each bind ATP.

This sequence belongs to the AAA ATPase family. In terms of assembly, interacts with PEX1; forming the PEX1-PEX6 AAA ATPase complex, which is composed of a heterohexamer formed by a trimer of PEX1-PEX6 dimers. Interacts with PEX26; interaction is direct and promotes recruitment to peroxisomal membranes. Interacts with ZFAND6.

Its subcellular location is the cytoplasm. It is found in the cytosol. It localises to the peroxisome membrane. The protein resides in the cell projection. The protein localises to the cilium. Its subcellular location is the photoreceptor outer segment. The enzyme catalyses ATP + H2O = ADP + phosphate + H(+). Its function is as follows. Component of the PEX1-PEX6 AAA ATPase complex, a protein dislocase complex that mediates the ATP-dependent extraction of the PEX5 receptor from peroxisomal membranes, an essential step for PEX5 recycling. Specifically recognizes PEX5 monoubiquitinated at 'Cys-11', and pulls it out of the peroxisome lumen through the PEX2-PEX10-PEX12 retrotranslocation channel. Extraction by the PEX1-PEX6 AAA ATPase complex is accompanied by unfolding of the TPR repeats and release of bound cargo from PEX5. The polypeptide is Peroxisomal ATPase PEX6 (Cricetulus griseus (Chinese hamster)).